Here is a 98-residue protein sequence, read N- to C-terminus: Ribonuclease P protein component 4 (98 aa).

Residues Cys-62, Cys-65, Cys-85, and Cys-88 each contribute to the Zn(2+) site.

This sequence belongs to the eukaryotic/archaeal RNase P protein component 4 family. In terms of assembly, consists of a catalytic RNA component and at least 4-5 protein subunits. Zn(2+) serves as cofactor.

Its subcellular location is the cytoplasm. It carries out the reaction Endonucleolytic cleavage of RNA, removing 5'-extranucleotides from tRNA precursor.. Part of ribonuclease P, a protein complex that generates mature tRNA molecules by cleaving their 5'-ends. The chain is Ribonuclease P protein component 4 from Thermoplasma volcanium (strain ATCC 51530 / DSM 4299 / JCM 9571 / NBRC 15438 / GSS1).